The sequence spans 245 residues: tRNA pseudouridine synthase A (245 aa).

Asp52 functions as the Nucleophile in the catalytic mechanism. Tyr111 serves as a coordination point for substrate.

This sequence belongs to the tRNA pseudouridine synthase TruA family. In terms of assembly, homodimer.

It catalyses the reaction uridine(38/39/40) in tRNA = pseudouridine(38/39/40) in tRNA. Its function is as follows. Formation of pseudouridine at positions 38, 39 and 40 in the anticodon stem and loop of transfer RNAs. In Rickettsia typhi (strain ATCC VR-144 / Wilmington), this protein is tRNA pseudouridine synthase A.